Here is a 240-residue protein sequence, read N- to C-terminus: PF03932 family protein CutC (240 aa).

This sequence belongs to the CutC family.

Its subcellular location is the cytoplasm. The sequence is that of PF03932 family protein CutC from Xanthomonas campestris pv. campestris (strain B100).